The chain runs to 480 residues: ATP-dependent rRNA helicase RRP3 (480 aa).

Composition is skewed to basic and acidic residues over residues 1–17 (MAKA…KEES) and 33–46 (DTTK…EPKK). The tract at residues 1-63 (MAKATEKRVK…VEVDESEEQT (63 aa)) is disordered. A Q motif motif is present at residues 64–92 (KTFKDLGVIDSICETCEELKFTKPTPIQA). Residues 95 to 266 (IPYALEGRDI…RASLVDPVRV (172 aa)) enclose the Helicase ATP-binding domain. An ATP-binding site is contributed by 108 to 115 (AQTGSGKT). The DEAD box signature appears at 214-217 (DEAD). The region spanning 277–437 (NLLQYMVFCP…SYPLESEAVM (161 aa)) is the Helicase C-terminal domain. The disordered stretch occupies residues 450–480 (AIQEMKGEDGTKKRSKFDKKRRRDEMDIGEQ). Basic residues predominate over residues 462–471 (KRSKFDKKRR).

Belongs to the DEAD box helicase family. DDX47/RRP3 subfamily. As to quaternary structure, interacts with the SSU processome.

It is found in the nucleus. The catalysed reaction is ATP + H2O = ADP + phosphate + H(+). ATP-dependent rRNA helicase required for pre-ribosomal RNA processing. Involved in the maturation of the 35S-pre-rRNA and to its cleavage to mature 18S rRNA. The protein is ATP-dependent rRNA helicase RRP3 of Yarrowia lipolytica (strain CLIB 122 / E 150) (Yeast).